A 394-amino-acid polypeptide reads, in one-letter code: MDSSYLRISLSFLFWALLLSPAVSQSSSCSSQTFSGVKSYPHCLDLPDLKAILHYSYDASNTTLAVVFSAPPSKPGGWIAWAINPKSTGMAGSQALVASKDPSTGVASVTTLNIVSYSSLVPSKLSFDVWDVKAEEAANDGGALRIFAKVKVPADLAASGKVNQVWQVGPGVSNGRIQAHDFSGPNLNSVGSLDLTGTTPGVPVSGGGGAGNSRIHKRNIHGILNAVSWGLLFPIGAMIARYMRIFESADPAWFYLHVSCQFSAYVIGVAGWATGLKLGSESKGIQYNTHRNIGICLFSIATLQMFAMLLRPRKDHKFRFVWNIYHHGVGYSILILGIINVFKGLSILNPKHTYKTAYIAVIGTLGGITLLLEVVTWVIVLKRKSAKSTKPLKA.

The first 24 residues, 1 to 24, serve as a signal peptide directing secretion; sequence MDSSYLRISLSFLFWALLLSPAVS. A DOMON domain is found at 49–169; sequence LKAILHYSYD…GKVNQVWQVG (121 aa). Residues 184–381 enclose the Cytochrome b561 domain; the sequence is GPNLNSVGSL…LEVVTWVIVL (198 aa). 2 helical membrane passes run 220-240 and 252-272; these read IHGI…AMIA and AWFY…VAGW. His-221, His-257, and His-290 together coordinate heme b. A helical membrane pass occupies residues 292 to 312; sequence NIGICLFSIATLQMFAMLLRP. His-326 is a heme b binding site. 2 helical membrane-spanning segments follow: residues 328-348 and 361-381; these read GVGY…LSIL and VIGT…VIVL.

The cofactor is heme b.

Its subcellular location is the membrane. Its function is as follows. May act as a catecholamine-responsive trans-membrane electron transporter. The polypeptide is Cytochrome b561 and DOMON domain-containing protein At4g12980 (Arabidopsis thaliana (Mouse-ear cress)).